A 1004-amino-acid chain; its full sequence is Copper-transporting ATPase (1004 aa).

Topologically, residues 1–262 (MREVILAVHG…FWKKNSIKST (262 aa)) are cytoplasmic. HMA domains lie at 2-67 (REVI…FDCE) and 80-146 (KEGL…FDSN). Residues Cys13, Cys16, Cys91, and Cys94 each contribute to the Cu(+) site. Residues 263-283 (LLAIICMLLYMIVPMMWPTIV) form a helical membrane-spanning segment. The Lumenal, vesicle segment spans residues 284 to 303 (QDRIFPYKETSFVRGLFYRD). A helical membrane pass occupies residues 304–324 (ILGVILASYIQFSVGFYFYKA). Residues 325 to 335 (AWASLKHGSGT) are Cytoplasmic-facing. The helical transmembrane segment at 336–356 (MDTLVCVSTTCAYTFSVFSLV) threads the bilayer. Topologically, residues 357–370 (HNMFHPSSTGKLPR) are lumenal, vesicle. Residues 371–391 (IVFDTSIMIISYISIGKYLET) traverse the membrane as a helical segment. Over 392–528 (LAKSQTSTAL…IQGYADYLAS (137 aa)) the chain is Cytoplasmic. The chain crosses the membrane as a helical span at residues 529–549 (IFVPGILILAVLTFFIWCFIL). Topologically, residues 550-577 (NISANPPVAFTANTKADNFFICLQTATS) are lumenal, vesicle. Residues 578-598 (VVIVACPCALGLATPTAIMVG) traverse the membrane as a helical segment. Over 599–901 (TGVGAQNGVL…LKTFKRIKLN (303 aa)) the chain is Cytoplasmic. Asp627 (4-aspartylphosphate intermediate) is an active-site residue. Mg(2+)-binding residues include Asp838 and Asp842. The helical transmembrane segment at 902-924 (LFWALCYNIFMIPIAMGVLIPWG) threads the bilayer. Over 925-927 (ITL) the chain is Lumenal, vesicle. A helical transmembrane segment spans residues 928-950 (PPMLAGLAMAFSSVSVVLSSLML). Topologically, residues 951–1004 (KKWTPPDIESHGISDFKSKFSIGNFWSRLFSTRAIAGEQDIESQAGLMSNEEVL) are cytoplasmic.

Belongs to the cation transport ATPase (P-type) (TC 3.A.3) family. Type IB subfamily. As to quaternary structure, interacts with the copper chaperone ATX1 via the copper anion.

The protein resides in the golgi apparatus. It localises to the trans-Golgi network membrane. It carries out the reaction Cu(+)(in) + ATP + H2O = Cu(+)(out) + ADP + phosphate + H(+). In terms of biological role, copper-transporting P-type ATPase necessary for the proper uptake of iron. Required for export of copper from cytosol into extracytosolic compartment. Retrieves copper from the metallochaperone ATX1 and incorporates it into trans-Golgi vesicles where they are acquired by the cell-surface iron transporter FET3. Required the production of inositolphosphorylceramide D, probably by delivering copper to a yet to be identified enzyme. This chain is Copper-transporting ATPase, found in Saccharomyces cerevisiae (strain ATCC 204508 / S288c) (Baker's yeast).